A 471-amino-acid chain; its full sequence is 3-isopropylmalate dehydratase large subunit (471 aa).

Cys-347, Cys-407, and Cys-410 together coordinate [4Fe-4S] cluster.

The protein belongs to the aconitase/IPM isomerase family. LeuC type 1 subfamily. In terms of assembly, heterodimer of LeuC and LeuD. It depends on [4Fe-4S] cluster as a cofactor.

The catalysed reaction is (2R,3S)-3-isopropylmalate = (2S)-2-isopropylmalate. Its pathway is amino-acid biosynthesis; L-leucine biosynthesis; L-leucine from 3-methyl-2-oxobutanoate: step 2/4. Functionally, catalyzes the isomerization between 2-isopropylmalate and 3-isopropylmalate, via the formation of 2-isopropylmaleate. The protein is 3-isopropylmalate dehydratase large subunit of Geobacillus kaustophilus (strain HTA426).